The following is a 750-amino-acid chain: Photosystem I P700 chlorophyll a apoprotein A1 (750 aa).

A run of 8 helical transmembrane segments spans residues 70–93 (VFSA…FHGA), 156–179 (LYCT…FHYH), 195–219 (LNHH…HVSL), 291–309 (IAHH…GHMY), 346–369 (WHAQ…HHMY), 385–411 (LSLF…IFMV), 433–455 (AIIS…LYIH), and 531–549 (FLVH…LILL). Residues Cys-573 and Cys-582 each coordinate [4Fe-4S] cluster. 2 consecutive transmembrane segments (helical) span residues 589–610 (HVFL…HFSW) and 664–686 (LSAY…MFLF). His-675 lines the chlorophyll a' pocket. Met-683 and Tyr-691 together coordinate chlorophyll a. Residue Trp-692 coordinates phylloquinone. Residues 724-744 (TVGVTHYLLGGIATTWAFFLA) traverse the membrane as a helical segment.

Belongs to the PsaA/PsaB family. The PsaA/B heterodimer binds the P700 chlorophyll special pair and subsequent electron acceptors. PSI consists of a core antenna complex that captures photons, and an electron transfer chain that converts photonic excitation into a charge separation. The eukaryotic PSI reaction center is composed of at least 11 subunits. P700 is a chlorophyll a/chlorophyll a' dimer, A0 is one or more chlorophyll a, A1 is one or both phylloquinones and FX is a shared 4Fe-4S iron-sulfur center. is required as a cofactor.

The protein localises to the plastid. Its subcellular location is the chloroplast thylakoid membrane. It catalyses the reaction reduced [plastocyanin] + hnu + oxidized [2Fe-2S]-[ferredoxin] = oxidized [plastocyanin] + reduced [2Fe-2S]-[ferredoxin]. In terms of biological role, psaA and PsaB bind P700, the primary electron donor of photosystem I (PSI), as well as the electron acceptors A0, A1 and FX. PSI is a plastocyanin-ferredoxin oxidoreductase, converting photonic excitation into a charge separation, which transfers an electron from the donor P700 chlorophyll pair to the spectroscopically characterized acceptors A0, A1, FX, FA and FB in turn. Oxidized P700 is reduced on the lumenal side of the thylakoid membrane by plastocyanin. This Oenothera elata subsp. hookeri (Hooker's evening primrose) protein is Photosystem I P700 chlorophyll a apoprotein A1.